Reading from the N-terminus, the 298-residue chain is MRHPEHQYLDLLAQVLEKGDQRIDRTGVGTRALFGAMIRFDLSDGRVPILTTKRVYWKTAVKEMLWFLTGQTNIQALLKENVRIWSDWPLARYRKETGDSISQEDFEKRVVEDNAFATRWGDLGPVYGKQWRRWLGADGREYDQIAELVQTLKSNPASRRMLFHAWNPPELGAMALPPCHMVYQYHVTSSGKLNCILYQRSCDLLLGAAFNYAAASALQLMLAQQADLTPGEFIWFGGDVHLYLNHLDQAREQISRAPRPFPTMRLTRRPDSIDGYRISDFEVDGYEPHAAIKADVAV.

DUMP-binding positions include Arg25 and 159-160; that span reads RR. Cys179 (nucleophile) is an active-site residue. Residues 200 to 203, Asn211, and 241 to 243 contribute to the dUMP site; these read RSCD and HLY. Residue Asp203 participates in (6R)-5,10-methylene-5,6,7,8-tetrahydrofolate binding. Ala297 serves as a coordination point for (6R)-5,10-methylene-5,6,7,8-tetrahydrofolate.

The protein belongs to the thymidylate synthase family. Bacterial-type ThyA subfamily. As to quaternary structure, homodimer.

It is found in the cytoplasm. The enzyme catalyses dUMP + (6R)-5,10-methylene-5,6,7,8-tetrahydrofolate = 7,8-dihydrofolate + dTMP. Its pathway is pyrimidine metabolism; dTTP biosynthesis. Catalyzes the reductive methylation of 2'-deoxyuridine-5'-monophosphate (dUMP) to 2'-deoxythymidine-5'-monophosphate (dTMP) while utilizing 5,10-methylenetetrahydrofolate (mTHF) as the methyl donor and reductant in the reaction, yielding dihydrofolate (DHF) as a by-product. This enzymatic reaction provides an intracellular de novo source of dTMP, an essential precursor for DNA biosynthesis. The sequence is that of Thymidylate synthase from Rhodopseudomonas palustris (strain BisA53).